We begin with the raw amino-acid sequence, 449 residues long: N-succinylarginine dihydrolase (449 aa).

Substrate contacts are provided by residues 19-28 (GGLSYGNVAS), N110, and 137-138 (HR). Residues 23 to 43 (YGNVASQSNSQQGSNPREAAR) form a disordered region. Residues 25 to 37 (NVASQSNSQQGSN) show a composition bias toward polar residues. The active site involves E174. Residue R214 participates in substrate binding. Residue H250 is part of the active site. Positions 252 and 365 each coordinate substrate. C371 serves as the catalytic Nucleophile.

It belongs to the succinylarginine dihydrolase family. Homodimer.

The enzyme catalyses N(2)-succinyl-L-arginine + 2 H2O + 2 H(+) = N(2)-succinyl-L-ornithine + 2 NH4(+) + CO2. Its pathway is amino-acid degradation; L-arginine degradation via AST pathway; L-glutamate and succinate from L-arginine: step 2/5. Functionally, catalyzes the hydrolysis of N(2)-succinylarginine into N(2)-succinylornithine, ammonia and CO(2). This Pseudomonas putida (strain GB-1) protein is N-succinylarginine dihydrolase.